A 366-amino-acid chain; its full sequence is Phenylalanine dehydrogenase (366 aa).

Arg45 lines the NAD(+) pocket. Lys69 serves as a coordination point for L-phenylalanine. The active site involves Lys81. Residues Asp116, Thr151, 181 to 187 (GVGKVGE), 204 to 205 (DI), 241 to 242 (AK), and 262 to 264 (SAN) contribute to the NAD(+) site. Asn264 lines the L-phenylalanine pocket.

It belongs to the Glu/Leu/Phe/Val dehydrogenases family.

The enzyme catalyses L-phenylalanine + NAD(+) + H2O = 3-phenylpyruvate + NH4(+) + NADH + H(+). It participates in amino-acid biosynthesis; L-phenylalanine biosynthesis; L-phenylalanine from phenylpyruvate (PDH route): step 1/1. In terms of biological role, catalyzes the reversible NAD(+)-dependent oxidative deamination of L-phenylalanine to phenylpyruvate. This Thermoactinomyces intermedius protein is Phenylalanine dehydrogenase.